The sequence spans 337 residues: MSIARRTTLSKFLIEQQRETNNLPADLRLLIEVVARACKAISYNVSKGALGDALGTAGSENVQGEVQKKLDILSNEILLDANEWGGNLAAMASEEMETFFPIPANYPRGEYLLVFDPLDGSSNIDVNVSIGTIFSVLRCPDGKQATEESFLQPGTEQVAAGYAVYGPQTVFVLTTGNGVNCFTLDREVGSWVLTQSNMQIPADTREYAINASNARHWYDPVKRYVDELNAGKDGPRGDNFNMRWIASMVADVHRILNRGGIFMYPADKRTPDRPGKLRLMYEANPMSFIVEQAGGAATTGTQRIMEVQPTGLHQRVPVFLGSKNEVKRVTGYHDEAK.

4 residues coordinate Mg(2+): E94, D116, L118, and D119. Substrate is bound by residues 119-122 (DGSS), N210, and K276. E282 provides a ligand contact to Mg(2+).

Belongs to the FBPase class 1 family. As to quaternary structure, homotetramer. It depends on Mg(2+) as a cofactor.

The protein localises to the cytoplasm. It carries out the reaction beta-D-fructose 1,6-bisphosphate + H2O = beta-D-fructose 6-phosphate + phosphate. The protein operates within carbohydrate biosynthesis; gluconeogenesis. The polypeptide is Fructose-1,6-bisphosphatase class 1 (Burkholderia cenocepacia (strain HI2424)).